The primary structure comprises 908 residues: MARGFQGVMLRGLGARDHQATVVDKEYIAPHFVRVRLVSPTLFDEVIVEPTSWLRFWFPDPDGSDTEFQRAYTITESDPETGRFAVDMVLHEPAGPASTWARTVEPGATIAVMSMGSRGFSVPEDPEDRPVGYLLIGDSASTPAINGIIEVVPHDIPIELYLEQHHDDDVLIPLAEHPRLRVHRVSRDDASSLAAALELRDWSNWYCWAGPEAGALKQVRTRLRDEFGFPKREVYAQAYWTEGRAMGSSRGETSTPAKPAAKTAPAKAAAKPAAASGAGTPEHAAAPAAATTGAPQAAPAPGAAQPRTPVRGRWRAEAGSRLLAPLKKPLIVSGVLQALITLIELAPFVLLVELARLLLGGAEAERLWTLGLTAVSLIGLGAVLAAAMTLWLHRVDARFAHELRGRLLTKLSRLPLGWFTRRGSASTKQLVQDDTLALHYLITHAIPDAVAAVVAPVAVLVYLFVADWRVALVLFIPVLVYLVLMSVMTIQSGSKIAQAPRWAERMGGEAGAFLEGQPVIRIFGGAAASRFRRRLDDYIDFLVSWQRPFVGKKTLMDLVTRPATFLWIILVAGVPLVVTGRMDPVNLLPFLLLGTTFGARLLGIGYGLSGIQTGMLAARRIQTVLDEPELVVRDRTGQAGTDHASGDQARPGTVELDRVSFEYRPGVPVIRDVTLTLRPGTVTALVGPSGSGKSTLAALVARFHDVTQGAIRVDGRDIRTLTADELYRRVGFVLQDAQLVHGSVAENIALAEPDAGLERIRTAARDAQIHDRITRMPDGYDSVLGAGSALSGGERQRVTIARAILADTPVLVLDEATAFADPESEYLVQQAINRLTRDRTVLVIAHRLHTITHADQIVVLDDGRIVEVGTHDELLAAGGRYRGLWDSGRYSSPDAGRPVSADAVEVGR.

Residues 1 to 329 lie on the Cytoplasmic side of the membrane; the sequence is MARGFQGVML…SRLLAPLKKP (329 aa). The FAD-binding FR-type domain occupies 15 to 124; that stretch reads ARDHQATVVD…MGSRGFSVPE (110 aa). The interval 16–245 is siderophore interaction domain; the sequence is RDHQATVVDK…AQAYWTEGRA (230 aa). Residues 70–73, 87–91, 97–98, and 241–243 each bind FAD; these read RAYT, DMVLH, AS, and TEG. The disordered stretch occupies residues 245–311; the sequence is AMGSSRGETS…GAAQPRTPVR (67 aa). Positions 253–309 are enriched in low complexity; the sequence is TSTPAKPAAKTAPAKAAAKPAAASGAGTPEHAAAPAAATTGAPQAAPAPGAAQPRTP. A helical transmembrane segment spans residues 330-350; the sequence is LIVSGVLQALITLIELAPFVL. The 283-residue stretch at 331–613 folds into the ABC transmembrane type-1 domain; the sequence is IVSGVLQALI…IGYGLSGIQT (283 aa). The Periplasmic portion of the chain corresponds to 351 to 371; the sequence is LVELARLLLGGAEAERLWTLG. The helical transmembrane segment at 372–392 threads the bilayer; that stretch reads LTAVSLIGLGAVLAAAMTLWL. Topologically, residues 393-444 are cytoplasmic; it reads HRVDARFAHELRGRLLTKLSRLPLGWFTRRGSASTKQLVQDDTLALHYLITH. A helical transmembrane segment spans residues 445 to 465; it reads AIPDAVAAVVAPVAVLVYLFV. The Periplasmic portion of the chain corresponds to 466–469; sequence ADWR. Residues 470 to 490 form a helical membrane-spanning segment; sequence VALVLFIPVLVYLVLMSVMTI. Residues 491 to 557 are Cytoplasmic-facing; it reads QSGSKIAQAP…PFVGKKTLMD (67 aa). A helical transmembrane segment spans residues 558 to 578; the sequence is LVTRPATFLWIILVAGVPLVV. Residues 579–586 are Periplasmic-facing; sequence TGRMDPVN. A helical transmembrane segment spans residues 587–607; that stretch reads LLPFLLLGTTFGARLLGIGYG. The Cytoplasmic portion of the chain corresponds to 608 to 908; sequence LSGIQTGMLA…VSADAVEVGR (301 aa). Residues 654 to 887 enclose the ABC transporter domain; it reads VELDRVSFEY…GGRYRGLWDS (234 aa). 687–694 contributes to the ATP binding site; sequence GPSGSGKS.

The protein belongs to the ABC transporter superfamily. Siderophore-Fe(3+) uptake transporter (SIUT) (TC 3.A.1.21) family. In terms of assembly, forms a heterodimer with IrtB. It depends on FAD as a cofactor.

The protein resides in the cell inner membrane. Its activity is regulated as follows. The ATPase activity of IrtAB is stimulated more than 38-fold in the presence of Fe-MBT, and more than 10-fold in the presence of Fe-cMBT. Part of the ABC transporter complex IrtAB involved in the import of iron-bound mycobactin (Fe-MBT) and carboxymycobactin (Fe-cMBT). Has a preference for Fe-MBT over Fe-cMBT. Mycobactins are then reduced by the siderophore interaction domain to facilitate iron release in the bacterial cell. Transmembrane domains (TMD) form a pore in the membrane and the ATP-binding domain (NBD) is responsible for energy generation. The chain is Mycobactin import ATP-binding/permease protein IrtA from Mycolicibacterium thermoresistibile (strain ATCC 19527 / DSM 44167 / CIP 105390 / JCM 6362 / NCTC 10409 / 316) (Mycobacterium thermoresistibile).